Here is a 383-residue protein sequence, read N- to C-terminus: UDP-N-acetylglucosamine--N-acetylmuramyl-(pentapeptide) pyrophosphoryl-undecaprenol N-acetylglucosamine transferase (383 aa).

Residues threonine 10–glycine 12, asparagine 124, arginine 165, serine 190, isoleucine 245, and glutamine 290 contribute to the UDP-N-acetyl-alpha-D-glucosamine site. The segment at serine 363–serine 383 is disordered.

Belongs to the glycosyltransferase 28 family. MurG subfamily.

The protein resides in the cell inner membrane. The catalysed reaction is di-trans,octa-cis-undecaprenyl diphospho-N-acetyl-alpha-D-muramoyl-L-alanyl-D-glutamyl-meso-2,6-diaminopimeloyl-D-alanyl-D-alanine + UDP-N-acetyl-alpha-D-glucosamine = di-trans,octa-cis-undecaprenyl diphospho-[N-acetyl-alpha-D-glucosaminyl-(1-&gt;4)]-N-acetyl-alpha-D-muramoyl-L-alanyl-D-glutamyl-meso-2,6-diaminopimeloyl-D-alanyl-D-alanine + UDP + H(+). It participates in cell wall biogenesis; peptidoglycan biosynthesis. Its function is as follows. Cell wall formation. Catalyzes the transfer of a GlcNAc subunit on undecaprenyl-pyrophosphoryl-MurNAc-pentapeptide (lipid intermediate I) to form undecaprenyl-pyrophosphoryl-MurNAc-(pentapeptide)GlcNAc (lipid intermediate II). The protein is UDP-N-acetylglucosamine--N-acetylmuramyl-(pentapeptide) pyrophosphoryl-undecaprenol N-acetylglucosamine transferase of Anaeromyxobacter dehalogenans (strain 2CP-1 / ATCC BAA-258).